A 363-amino-acid chain; its full sequence is Aminomethyltransferase (363 aa).

The protein belongs to the GcvT family. In terms of assembly, the glycine cleavage system is composed of four proteins: P, T, L and H.

It catalyses the reaction N(6)-[(R)-S(8)-aminomethyldihydrolipoyl]-L-lysyl-[protein] + (6S)-5,6,7,8-tetrahydrofolate = N(6)-[(R)-dihydrolipoyl]-L-lysyl-[protein] + (6R)-5,10-methylene-5,6,7,8-tetrahydrofolate + NH4(+). The glycine cleavage system catalyzes the degradation of glycine. This Nitrosomonas eutropha (strain DSM 101675 / C91 / Nm57) protein is Aminomethyltransferase.